The chain runs to 214 residues: Thymidylate kinase (214 aa).

14–21 (GLEGAGKT) serves as a coordination point for ATP.

This sequence belongs to the thymidylate kinase family.

The enzyme catalyses dTMP + ATP = dTDP + ADP. Phosphorylation of dTMP to form dTDP in both de novo and salvage pathways of dTTP synthesis. The protein is Thymidylate kinase of Mannheimia succiniciproducens (strain KCTC 0769BP / MBEL55E).